We begin with the raw amino-acid sequence, 245 residues long: Aliphatic sulfonates import ATP-binding protein SsuB (245 aa).

Residues 6-225 enclose the ABC transporter domain; sequence VTVRGLRRAF…SRGDEGFDDL (220 aa). ATP is bound at residue 38-45; that stretch reads GLSGSGKS.

It belongs to the ABC transporter superfamily. Aliphatic sulfonates importer (TC 3.A.1.17.2) family. The complex is composed of two ATP-binding proteins (SsuB), two transmembrane proteins (SsuC) and a solute-binding protein (SsuA).

The protein resides in the cell membrane. The enzyme catalyses ATP + H2O + aliphatic sulfonate-[sulfonate-binding protein]Side 1 = ADP + phosphate + aliphatic sulfonateSide 2 + [sulfonate-binding protein]Side 1.. Functionally, part of the ABC transporter complex SsuABC involved in aliphatic sulfonates import. Responsible for energy coupling to the transport system. The protein is Aliphatic sulfonates import ATP-binding protein SsuB of Mycobacterium sp. (strain MCS).